A 1720-amino-acid chain; its full sequence is MLISKNMPWRRLQGISFGMYSAEELKKLSVKSITNPRYLDSLGNPSANGLYDLALGPADSKEVCSTCVQDFSNCSGHLGHIELPLTVYNPLLFDKLYLLLRGSCLNCHMLTCPRAVIHLLLCQLRVLEVGALQAVYELERILNRFLEENPDPSASEIREELEQYTTEIVQNNLLGSQGAHVKNVCESKSKLIALFWKAHMNAKRCPHCKTGRSVVRKEHNSKLTITFPAMVHRTAGQKDSEPLGIEEAQIGKRGYLTPTSAREHLSALWKNEGFFLNYLFSGMDDDGMESRFNPSVFFLDFLVVPPSRYRPVSRLGDQMFTNGQTVNLQAVMKDVVLIRKLLALMAQEQKLPEEVATPTTDEEKDSLIAIDRSFLSTLPGQSLIDKLYNIWIRLQSHVNIVFDSEMDKLMMDKYPGIRQILEKKEGLFRKHMMGKRVDYAARSVICPDMYINTNEIGIPMVFATKLTYPQPVTPWNVQELRQAVINGPNVHPGASMVINEDGSRTALSAVDMTQREAVAKQLLTPATGAPKPQGTKIVCRHVKNGDILLLNRQPTLHRPSIQAHRARILPEEKVLRLHYANCKAYNADFDGDEMNAHFPQSELGRAEAYVLACTDQQYLVPKDGQPLAGLIQDHMVSGASMTTRGCFFTREHYMELVYRGLTDKVGRVKLLSPSILKPFPLWTGKQVVSTLLINIIPEDHIPLNLSGKAKITGKAWVKETPRSVPGFNPDSMCESQVIIREGELLCGVLDKAHYGSSAYGLVHCCYEIYGGETSGKVLTCLARLFTAYLQLYRGFTLGVEDILVKPKADVKRQRIIEESTHCGPQAVRAALNLPEAASYDEVRGKWQDAHLGKDQRDFNMIDLKFKEEVNHYSNEINKACMPFGLHRQFPENSLQMMVQSGAKGSTVNTMQISCLLGQIELEGRRPPLMASGKSLPCFEPYEFTPRAGGFVTGRFLTGIKPPEFFFHCMAGREGLVDTAVKTSRSGYLQRCIIKHLEGLVVQYDLTVRDSDGSVVQFLYGEDGLDIPKTQFLQPKQFPFLASNYEVIMKSQHLHEVLSRADPKKALHHFRAIKKWQSKHPNTLLRRGAFLSYSQKIQEAVKALKLESENRNGRSPGTQEMLRMWYELDEESRRKYQKKAAACPDPSLSVWRPDIYFASVSETFETKVDDYSQEWAAQTEKSYEKSELSLDRLRTLLQLKWQRSLCEPGEAVGLLAAQSIGEPSTQMTLNTFHFAGRGEMNVTLGIPRLREILMVASANIKTPMMSVPVLNTKKALKRVKSLKKQLTRVCLGEVLQKIDVQESFCMEEKQNKFQVYQLRFQFLPHAYYQQEKCLRPEDILRFMETRFFKLLMESIKKKNNKASAFRNVNTRRATQRDLDNAGELGRSRGEQEGDEEEEGHIVDAEAEEGDADASDAKRKEKQEEEVDYESEEEEEREGEENDDEDMQEERNPHREGARKTQEQDEEVGLGTEEDPSLPALLTQPRKPTHSQEPQGPEAMERRVQAVREIHPFIDDYQYDTEESLWCQVTVKLPLMKINFDMSSLVVSLAHGAVIYATKGITRCLLNETTNNKNEKELVLNTEGINLPELFKYAEVLDLRRLYSNDIHAIANTYGIEAALRVIEKEIKDVFAVYGIAVDPRHLSLVADYMCFEGVYKPLNRFGIRSNSSPLQQMTFETSFQFLKQATMLGSHDELRSPSACLVVGKVVRGGTGLFELKQPLR.

Residues cysteine 64, cysteine 67, cysteine 74, histidine 77, cysteine 104, and cysteine 107 each contribute to the Zn(2+) site. Residues 110–201 (LTCPRAVIHL…IALFWKAHMN (92 aa)) are clamp. Zn(2+) is bound by residues cysteine 205 and cysteine 208. Serine 240 is modified (phosphoserine). The interval 320–426 (FTNGQTVNLQ…IRQILEKKEG (107 aa)) is clamp. The segment at 403 to 416 (DSEMDKLMMDKYPG) is rudder. DNA-binding residues include lysine 424, arginine 429, and arginine 436. Residues 468–542 (YPQPVTPWNV…QGTKIVCRHV (75 aa)) form an involved in RRN3 binding to Pol I complex region. Position 552 (arginine 552) interacts with RNA. Mg(2+) is bound by residues aspartate 588, aspartate 590, and aspartate 592. Aspartate 592 lines the RNA pocket. Residues 805–883 (KPKADVKRQR…NEINKACMPF (79 aa)) are funnel. A bridging helix region spans residues 960-1001 (KPPEFFFHCMAGREGLVDTAVKTSRSGYLQRCIIKHLEGLVV). Residues 1060–1155 (ADPKKALHHF…SLSVWRPDIY (96 aa)) are mediates the interaction with TOP2A. The tract at residues 1207-1248 (PGEAVGLLAAQSIGEPSTQMTLNTFHFAGRGEMNVTLGIPRL) is trigger loop. Residue arginine 1249 coordinates DNA. The disordered stretch occupies residues 1365–1498 (RNVNTRRATQ…SQEPQGPEAM (134 aa)). Basic and acidic residues predominate over residues 1373-1390 (TQRDLDNAGELGRSRGEQ). Serine 1386 carries the post-translational modification Phosphoserine. 2 stretches are compositionally biased toward acidic residues: residues 1391-1412 (EGDEEEEGHIVDAEAEEGDADA) and 1422-1446 (EEEVDYESEEEEEREGEENDDEDMQ). Over residues 1447-1461 (EERNPHREGARKTQE) the composition is skewed to basic and acidic residues. Over residues 1462–1474 (QDEEVGLGTEEDP) the composition is skewed to acidic residues.

Belongs to the RNA polymerase beta' chain family. In terms of assembly, component of the RNA polymerase I (Pol I) complex consisting of 13 subunits: a ten-subunit catalytic core composed of POLR1A/RPA1, POLR1B/RPA2, POLR1C/RPAC1, POLR1D/RPAC2, POLR1H/RPA12, POLR2E/RPABC1, POLR2F/RPABC2, POLR2H/RPABC3, POLR2K/RPABC4 and POLR2L/RPABC5; a mobile stalk subunit POLR1F/RPA43 protruding from the core and additional subunits homologous to general transcription factors POLR1E/RPA49 and POLR1G/RPA34. Part of Pol I pre-initiation complex (PIC), in which Pol I core assembles with RRN3 and promoter-bound UTBF and SL1/TIF-IB complex. Interacts (via dock II domain) with TOP2A; this interaction may assist Pol I transcription initiation by releasing supercoils occurring during DNA unwinding. Interacts with CAVIN1; this interaction induces the dissociation of Pol I complex paused at rDNA terminator sequences. Interacts with MYO1C. Interacts with ERBB2. Interacts with DDX11. Interacts with RECQL5. Requires Mg(2+) as cofactor.

The protein resides in the nucleus. Its subcellular location is the nucleolus. It is found in the chromosome. It catalyses the reaction RNA(n) + a ribonucleoside 5'-triphosphate = RNA(n+1) + diphosphate. Catalytic core component of RNA polymerase I (Pol I), a DNA-dependent RNA polymerase which synthesizes ribosomal RNA precursors using the four ribonucleoside triphosphates as substrates. Transcribes 47S pre-rRNAs from multicopy rRNA gene clusters, giving rise to 5.8S, 18S and 28S ribosomal RNAs. Pol I-mediated transcription cycle proceeds through transcription initiation, transcription elongation and transcription termination stages. During transcription initiation, Pol I pre-initiation complex (PIC) is recruited by the selectivity factor 1 (SL1/TIF-IB) complex bound to the core promoter that precedes an rDNA repeat unit. The PIC assembly bends the promoter favoring the formation of the transcription bubble and promoter escape. Once the polymerase has escaped from the promoter it enters the elongation phase during which RNA is actively polymerized, based on complementarity with the template DNA strand. Highly processive, assembles in structures referred to as 'Miller trees' where many elongating Pol I complexes queue and transcribe the same rDNA coding regions. At terminator sequences downstream of the rDNA gene, PTRF interacts with Pol I and halts Pol I transcription leading to the release of the RNA transcript and polymerase from the DNA. Forms Pol I active center together with the second largest subunit POLR1B/RPA2. Appends one nucleotide at a time to the 3' end of the nascent RNA, with POLR1A/RPA1 contributing a Mg(2+)-coordinating DxDGD motif, and POLR1B/RPA2 participating in the coordination of a second Mg(2+) ion and providing lysine residues believed to facilitate Watson-Crick base pairing between the incoming nucleotide and the template base. Typically, Mg(2+) ions direct a 5' nucleoside triphosphate to form a phosphodiester bond with the 3' hydroxyl of the preceding nucleotide of the nascent RNA, with the elimination of pyrophosphate. Has proofreading activity: Pauses and backtracks to allow the cleavage of a missincorporated nucleotide via POLR1H/RPA12. High Pol I processivity is associated with decreased transcription fidelity. The polypeptide is DNA-directed RNA polymerase I subunit RPA1 (Homo sapiens (Human)).